Consider the following 233-residue polypeptide: Orotidine 5'-phosphate decarboxylase (233 aa).

Substrate contacts are provided by residues Asp13, Lys35, 62 to 71 (DLKFHDIPNT), Thr122, Arg182, Gln191, Gly211, and Arg212. Residue Lys64 is the Proton donor of the active site.

The protein belongs to the OMP decarboxylase family. Type 1 subfamily. In terms of assembly, homodimer.

The catalysed reaction is orotidine 5'-phosphate + H(+) = UMP + CO2. The protein operates within pyrimidine metabolism; UMP biosynthesis via de novo pathway; UMP from orotate: step 2/2. Its function is as follows. Catalyzes the decarboxylation of orotidine 5'-monophosphate (OMP) to uridine 5'-monophosphate (UMP). The chain is Orotidine 5'-phosphate decarboxylase from Pseudomonas putida (strain GB-1).